We begin with the raw amino-acid sequence, 215 residues long: S-crystallin 3 (215 aa).

Residues 2-80 (PSYTLHYFNH…YLAREFGYHG (79 aa)) form the GST N-terminal domain. The GST C-terminal domain maps to 82-215 (SNMEMARVDF…YLKKRCRTDF (134 aa)).

Belongs to the GST superfamily. In terms of tissue distribution, lens.

S-crystallins are structural components of squids and octopi eye lens. Contains relatively little if any GST activity. The sequence is that of S-crystallin 3 from Enteroctopus dofleini (North Pacific giant octopus).